The primary structure comprises 419 residues: Dual specificity protein phosphatase 7 (419 aa).

The tract at residues 1–47 is disordered; sequence MKNQLRGPPARAHMSTSGAAAAGGTRAGSEPGAGSGSGAGTGAGAAT. The segment covering 10–29 has biased composition (low complexity); sequence ARAHMSTSGAAAAGGTRAGS. Gly residues predominate over residues 31–47; it reads PGAGSGSGAGTGAGAAT. A Rhodanese domain is found at 68–187; that stretch reads GGASLLLLDC…FQTEYSEHCE (120 aa). Positions 216–240 are disordered; that stretch reads CSDGESDRELPSSATESDGSPVPSS. Polar residues predominate over residues 227–240; sequence SSATESDGSPVPSS. The Tyrosine-protein phosphatase domain maps to 244-387; sequence FPVQILPYLY…LLDFERTLGL (144 aa). The active-site Phosphocysteine intermediate is C331. 331–337 is a substrate binding site; that stretch reads CLAGISR.

This sequence belongs to the protein-tyrosine phosphatase family. Non-receptor class dual specificity subfamily. As to quaternary structure, interacts with MAPK1/ERK2; the interaction enhances DUSP7 phosphatase activity. As to expression, strongly expressed in liver. Expressed at significantly higher levels in malignant hematopoietic cells than in corresponding non-malignant cells.

Its subcellular location is the cytoplasm. The catalysed reaction is O-phospho-L-tyrosyl-[protein] + H2O = L-tyrosyl-[protein] + phosphate. It carries out the reaction O-phospho-L-seryl-[protein] + H2O = L-seryl-[protein] + phosphate. The enzyme catalyses O-phospho-L-threonyl-[protein] + H2O = L-threonyl-[protein] + phosphate. Its activity is regulated as follows. Strongly inhibited by sodium orthovanadate. Functionally, dual specificity protein phosphatase. Shows high activity towards MAPK1/ERK2. Also has lower activity towards MAPK14 and MAPK8. In arrested oocytes, plays a role in meiotic resumption. Promotes nuclear envelope breakdown and activation of the CDK1/Cyclin-B complex in oocytes, probably by dephosphorylating and inactivating the conventional protein kinase C (cPKC) isozyme PRKCB. May also inactivate PRKCA and/or PRKCG. Also important in oocytes for normal chromosome alignment on the metaphase plate and progression to anaphase, where it might regulate activity of the spindle-assembly checkpoint (SAC) complex. The polypeptide is Dual specificity protein phosphatase 7 (Homo sapiens (Human)).